The chain runs to 215 residues: RxLR effector protein PITG_00582 (215 aa).

The signal sequence occupies residues 1–19 (MLPYKTLLLALGFFFTVQC). The RxLR-dEER motif lies at 39–51 (RLLRSPEKTDEER). Positions 81-149 (VAKQAKEMSN…QNELEKLAKQ (69 aa)) form a coiled coil.

It belongs to the RxLR effector family.

It localises to the secreted. The protein resides in the host cell membrane. Its function is as follows. Effector that might be involved in host plant infection. The polypeptide is RxLR effector protein PITG_00582 (Phytophthora infestans (strain T30-4) (Potato late blight agent)).